The sequence spans 415 residues: Tyrosine--tRNA ligase (415 aa).

Position 34 (tyrosine 34) interacts with L-tyrosine. A 'HIGH' region motif is present at residues proline 39–asparagine 48. Residues tyrosine 163 and glutamine 167 each coordinate L-tyrosine. Residues lysine 225–serine 229 carry the 'KMSKS' region motif. Residue lysine 228 participates in ATP binding. Residues glutamate 349 to lysine 414 enclose the S4 RNA-binding domain.

It belongs to the class-I aminoacyl-tRNA synthetase family. TyrS type 1 subfamily. In terms of assembly, homodimer.

It is found in the cytoplasm. It carries out the reaction tRNA(Tyr) + L-tyrosine + ATP = L-tyrosyl-tRNA(Tyr) + AMP + diphosphate + H(+). Functionally, catalyzes the attachment of tyrosine to tRNA(Tyr) in a two-step reaction: tyrosine is first activated by ATP to form Tyr-AMP and then transferred to the acceptor end of tRNA(Tyr). This chain is Tyrosine--tRNA ligase, found in Mycoplasma mobile (strain ATCC 43663 / 163K / NCTC 11711) (Mesomycoplasma mobile).